We begin with the raw amino-acid sequence, 290 residues long: UPF0761 membrane protein YihY (290 aa).

6 helical membrane-spanning segments follow: residues Leu44–Phe64, Val104–Leu124, Phe140–Ile160, Ile183–Thr203, Ala210–Leu230, and Val244–Leu264.

Belongs to the UPF0761 family.

The protein resides in the cell inner membrane. The polypeptide is UPF0761 membrane protein YihY (Salmonella paratyphi B (strain ATCC BAA-1250 / SPB7)).